Consider the following 363-residue polypeptide: S-adenosylmethionine:tRNA ribosyltransferase-isomerase (363 aa).

The protein belongs to the QueA family. In terms of assembly, monomer.

It localises to the cytoplasm. It catalyses the reaction 7-aminomethyl-7-carbaguanosine(34) in tRNA + S-adenosyl-L-methionine = epoxyqueuosine(34) in tRNA + adenine + L-methionine + 2 H(+). The protein operates within tRNA modification; tRNA-queuosine biosynthesis. In terms of biological role, transfers and isomerizes the ribose moiety from AdoMet to the 7-aminomethyl group of 7-deazaguanine (preQ1-tRNA) to give epoxyqueuosine (oQ-tRNA). The protein is S-adenosylmethionine:tRNA ribosyltransferase-isomerase of Mannheimia succiniciproducens (strain KCTC 0769BP / MBEL55E).